The following is a 354-amino-acid chain: Putative F-box/kelch-repeat protein At5g03000 (354 aa).

The F-box domain occupies 37-86 (PTVFSSLPDELILNCLARVSRFYRPSLSLVNKEFQSLIASPDLEATRSRI). Kelch repeat units lie at residues 143–189 (EIYI…VIDG) and 190–236 (KIYV…FPGK).

The sequence is that of Putative F-box/kelch-repeat protein At5g03000 from Arabidopsis thaliana (Mouse-ear cress).